Consider the following 557-residue polypeptide: Putative inactive polypeptide N-acetylgalactosaminyltransferase 11 (557 aa).

The Cytoplasmic portion of the chain corresponds to 1–4 (MKSL). The helical; Signal-anchor for type II membrane protein transmembrane segment at 5–27 (LFGTPCSCAIFILVYCIITLFIW) threads the bilayer. Residues 28–557 (FLYTDNLSNA…MRDICLSVNH (530 aa)) lie on the Lumenal side of the membrane. 2 N-linked (GlcNAc...) asparagine glycosylation sites follow: asparagine 33 and asparagine 103. Disulfide bonds link cysteine 99–cysteine 325, cysteine 316–cysteine 397, cysteine 437–cysteine 450, cysteine 472–cysteine 486, and cysteine 511–cysteine 526. The segment at 109 to 215 (TVTVSIVIAI…RGWLPPLLEP (107 aa)) is catalytic subdomain A. A glycan (N-linked (GlcNAc...) asparagine) is linked at asparagine 220. Residues 271 to 333 (PYPSSQLEGR…PCSRVGIIYK (63 aa)) are catalytic subdomain B. Asparagine 379 is a glycosylation site (N-linked (GlcNAc...) asparagine). A Ricin B-type lectin domain is found at 456–557 (EDWTLTSRCQ…MRDICLSVNH (102 aa)).

The protein belongs to the glycosyltransferase 2 family. GalNAc-T subfamily.

It localises to the golgi apparatus membrane. Probable inactive glycosyltransferase. The sequence is that of Putative inactive polypeptide N-acetylgalactosaminyltransferase 11 from Drosophila melanogaster (Fruit fly).